The chain runs to 268 residues: NH(3)-dependent NAD(+) synthetase (268 aa).

46 to 53 is an ATP binding site; it reads GVSGGQDS. Asp-52 is a binding site for Mg(2+). Arg-140 serves as a coordination point for deamido-NAD(+). Thr-160 lines the ATP pocket. Mg(2+) is bound at residue Glu-165. Deamido-NAD(+)-binding residues include Lys-173 and Asp-180. Residue Lys-189 coordinates ATP. 260–261 is a binding site for deamido-NAD(+); that stretch reads HK.

Belongs to the NAD synthetase family. Homodimer.

The enzyme catalyses deamido-NAD(+) + NH4(+) + ATP = AMP + diphosphate + NAD(+) + H(+). Its pathway is cofactor biosynthesis; NAD(+) biosynthesis; NAD(+) from deamido-NAD(+) (ammonia route): step 1/1. Functionally, catalyzes the ATP-dependent amidation of deamido-NAD to form NAD. Uses ammonia as a nitrogen source. This Buchnera aphidicola subsp. Acyrthosiphon pisum (strain Tuc7) protein is NH(3)-dependent NAD(+) synthetase.